The chain runs to 285 residues: Trypsin Tyr p 3.0101 (285 aa).

The first 16 residues, 1 to 16 (MKILLFLCFLVSVAFA), serve as a signal peptide directing secretion. Positions 17–33 (KPPTIQLKSNTKSQNGF) are excised as a propeptide. The region spanning 34 to 262 (IVGGTEAVDG…YLDWIELSAK (229 aa)) is the Peptidase S1 domain. Residues cysteine 58 and cysteine 74 are joined by a disulfide bond. Catalysis depends on charge relay system residues histidine 73 and aspartate 120. 2 disulfide bridges follow: cysteine 186-cysteine 202 and cysteine 214-cysteine 238. The active-site Charge relay system is the serine 218.

This sequence belongs to the peptidase S1 family.

The protein resides in the secreted. It carries out the reaction Preferential cleavage: Arg-|-Xaa, Lys-|-Xaa.. Its activity is regulated as follows. Inhibited by the serine protease inhibitor phenylmethylsulfonyl, and trypsin inhibitors soybean trypsin inhibitor and tosyllysine chloromethyl ketone. Not inhibited by dithiothreitol, a cysteine protease inhibitor. In terms of biological role, digests TAMe (p-toluene arginine methyl ester), but not ethyl N-benzoyl-L-tyrosinate (BTEE). This chain is Trypsin Tyr p 3.0101, found in Tyrophagus putrescentiae (Mold mite).